The sequence spans 251 residues: Small ribosomal subunit protein uS3 (251 aa).

In terms of domain architecture, KH type-2 spans 39 to 112 (IRKYINEVYA…NIILNVVEVR (74 aa)). The tract at residues 222 to 251 (EEKKPAKKFNKKPVAAKPANKEEKSSKEVK) is disordered. Over residues 240 to 251 (ANKEEKSSKEVK) the composition is skewed to basic and acidic residues.

The protein belongs to the universal ribosomal protein uS3 family. Part of the 30S ribosomal subunit. Forms a tight complex with proteins S10 and S14.

In terms of biological role, binds the lower part of the 30S subunit head. Binds mRNA in the 70S ribosome, positioning it for translation. This is Small ribosomal subunit protein uS3 from Anaeroplasma abactoclasticum.